We begin with the raw amino-acid sequence, 222 residues long: RING finger protein 141 (222 aa).

Residues 147–184 (CCICMDGKADLILPCAHSFCQKCIDKWSGQSRNCPVCR) form an RING-type zinc finger.

The protein is RING finger protein 141 (rnf141) of Danio rerio (Zebrafish).